Here is a 149-residue protein sequence, read N- to C-terminus: MMKQFKEFAVRGNVVDMAVGIIVGGAFGKLVNTLVSDVMMPPLGFLTGGVDFTNLYFVLSEGSTPGPYAALEQARAAGAVTVNYGLFINAMISFIIMAFAVYLLVRGINSLRRKEEAAPPPSTKQCPFCLSTVPLKATRCPACTSGLEK.

2 helical membrane-spanning segments follow: residues 14-34 (VVDM…VNTL) and 85-105 (GLFI…YLLV).

This sequence belongs to the MscL family. In terms of assembly, homopentamer.

The protein localises to the cell inner membrane. Functionally, channel that opens in response to stretch forces in the membrane lipid bilayer. May participate in the regulation of osmotic pressure changes within the cell. In Chlorobium phaeovibrioides (strain DSM 265 / 1930) (Prosthecochloris vibrioformis (strain DSM 265)), this protein is Large-conductance mechanosensitive channel.